Consider the following 406-residue polypeptide: MDGWRRMPRWGLLLLLWGSCTFGLPTDTTTFKRIFLKRMPSIRESLKERGVDMARLGPEWSQPMKRLALGNTTSSVILTNYMDTQYYGEIGIGTPPQTFKVVFDTGSSNVWVPSSKCSRLYTACVYHKLFDASDSSSYKHNGTELTLRYSTGTVSGFLSQDIITVGGITVTQMFGEVTEMPALPFMLAEFDGVVGMGFIEQAIGRVTPIFDNILSQGVLKEDVFSFYYNRDSENAQSLGGQIVLGGSDPQHYEGNFHYINLIKTGVWQIPMKGVSVGSSTLLCEDGCLALVDTGASYISGSTSSIEKLMEALGAKKRLFDYVVKCNEGPTLPDISFHLGGKEYTLTSADYVFQESYSSKKLCTLAIHAMDIPPPTGPTWALGATFIRKFYTEFDRRNNRIGFALAH.

A signal peptide spans 1–23 (MDGWRRMPRWGLLLLLWGSCTFG). The propeptide at 24–66 (LPTDTTTFKRIFLKRMPSIRESLKERGVDMARLGPEWSQPMKR) is activation peptide. Asparagine 71 is a glycosylation site (N-linked (GlcNAc...) asparagine). Residues 86 to 403 (YYGEIGIGTP…DRRNNRIGFA (318 aa)) enclose the Peptidase A1 domain. The active site involves aspartate 104. Cysteine 117 and cysteine 124 are disulfide-bonded. Residue asparagine 141 is glycosylated (N-linked (GlcNAc...) asparagine). A disulfide bond links cysteine 283 and cysteine 287. Aspartate 292 is an active-site residue. A disulfide bridge connects residues cysteine 325 and cysteine 362.

It belongs to the peptidase A1 family. As to quaternary structure, interacts with ATP6AP2.

Its subcellular location is the secreted. It is found in the membrane. It carries out the reaction Cleavage of Leu-|-Xaa bond in angiotensinogen to generate angiotensin I.. With respect to regulation, interaction with ATP6AP2 results in a 5-fold increased efficiency in angiotensinogen processing. Its function is as follows. Renin is a highly specific endopeptidase, whose only known function is to generate angiotensin I from angiotensinogen in the plasma, initiating a cascade of reactions that produce an elevation of blood pressure and increased sodium retention by the kidney. This chain is Renin (REN), found in Macaca mulatta (Rhesus macaque).